Here is a 677-residue protein sequence, read N- to C-terminus: uncharacterized protein (677 aa).

3 helical membrane-spanning segments follow: residues 80–102, 338–360, and 367–386; these read ILSLFATLVLMVGVFFCAPRASF, ALLSNASGAFVIAQAVPVLLFGF, and LVAMVAVVTTFLLVFQLLSL. A disordered region spans residues 523–556; that stretch reads DEAASLPSDSSPEEDLDPLEEVESIEGTAEESTR. A compositionally biased stretch (acidic residues) spans 533-546; the sequence is SPEEDLDPLEEVES.

The protein localises to the cell membrane. This is an uncharacterized protein from Treponema pallidum (strain Nichols).